A 167-amino-acid chain; its full sequence is Lipoprotein signal peptidase (167 aa).

The next 4 membrane-spanning stretches (helical) occupy residues 8 to 28, 46 to 66, 70 to 90, and 101 to 121; these read TFLTSFLLVSLDWVSKLVVLL, WGHFSFLIVPSFNEGAAFGLF, KIPLLIFRVFVILCLFLFLGI, and IALTLILAGALGNVGDILFHG. Active-site residues include Asp125 and Asp143. The helical transmembrane segment at 139–159 threads the bilayer; the sequence is FNLADAFISLGTLLLVGHLYF.

It belongs to the peptidase A8 family.

The protein resides in the cell inner membrane. It carries out the reaction Release of signal peptides from bacterial membrane prolipoproteins. Hydrolyzes -Xaa-Yaa-Zaa-|-(S,diacylglyceryl)Cys-, in which Xaa is hydrophobic (preferably Leu), and Yaa (Ala or Ser) and Zaa (Gly or Ala) have small, neutral side chains.. Its pathway is protein modification; lipoprotein biosynthesis (signal peptide cleavage). Functionally, this protein specifically catalyzes the removal of signal peptides from prolipoproteins. This chain is Lipoprotein signal peptidase, found in Chlamydia muridarum (strain MoPn / Nigg).